The primary structure comprises 338 residues: tRNA N6-adenosine threonylcarbamoyltransferase (338 aa).

Residues His-110 and His-114 each coordinate Fe cation. Residues 132-136 (ILSGG), Asp-165, Gly-178, and Asn-274 each bind substrate. Asp-298 is a binding site for Fe cation.

Belongs to the KAE1 / TsaD family. Fe(2+) is required as a cofactor.

It is found in the cytoplasm. It catalyses the reaction L-threonylcarbamoyladenylate + adenosine(37) in tRNA = N(6)-L-threonylcarbamoyladenosine(37) in tRNA + AMP + H(+). Its function is as follows. Required for the formation of a threonylcarbamoyl group on adenosine at position 37 (t(6)A37) in tRNAs that read codons beginning with adenine. Is involved in the transfer of the threonylcarbamoyl moiety of threonylcarbamoyl-AMP (TC-AMP) to the N6 group of A37, together with TsaE and TsaB. TsaD likely plays a direct catalytic role in this reaction. The polypeptide is tRNA N6-adenosine threonylcarbamoyltransferase (Borrelia hermsii (strain HS1 / DAH)).